Reading from the N-terminus, the 602-residue chain is DNA mismatch repair protein MutL (602 aa).

Belongs to the DNA mismatch repair MutL/HexB family.

Functionally, this protein is involved in the repair of mismatches in DNA. It is required for dam-dependent methyl-directed DNA mismatch repair. May act as a 'molecular matchmaker', a protein that promotes the formation of a stable complex between two or more DNA-binding proteins in an ATP-dependent manner without itself being part of a final effector complex. This chain is DNA mismatch repair protein MutL, found in Geotalea uraniireducens (strain Rf4) (Geobacter uraniireducens).